A 178-amino-acid chain; its full sequence is ATP-dependent protease subunit HslV (178 aa).

Residue threonine 7 is part of the active site. Residues glycine 162, cysteine 165, and threonine 168 each coordinate Na(+).

The protein belongs to the peptidase T1B family. HslV subfamily. In terms of assembly, a double ring-shaped homohexamer of HslV is capped on each side by a ring-shaped HslU homohexamer. The assembly of the HslU/HslV complex is dependent on binding of ATP.

The protein localises to the cytoplasm. The enzyme catalyses ATP-dependent cleavage of peptide bonds with broad specificity.. With respect to regulation, allosterically activated by HslU binding. In terms of biological role, protease subunit of a proteasome-like degradation complex believed to be a general protein degrading machinery. In Dechloromonas aromatica (strain RCB), this protein is ATP-dependent protease subunit HslV.